Reading from the N-terminus, the 80-residue chain is Large ribosomal subunit protein uL29 (80 aa).

Belongs to the universal ribosomal protein uL29 family.

The polypeptide is Large ribosomal subunit protein uL29 (Mycobacterium marinum (strain ATCC BAA-535 / M)).